The following is a 919-amino-acid chain: DNA double-strand break repair Rad50 ATPase (919 aa).

Residues 33-39 (NGAGKST) and Gln-143 contribute to the ATP site. 3 coiled-coil regions span residues 208 to 268 (MTLR…MLVN), 315 to 379 (HEVA…RRYT), and 414 to 458 (ESVL…LEES). The 100-residue stretch at 417-516 (LERLDAVIND…EASRLQDKRR (100 aa)) folds into the Zinc-hook domain. Residues Cys-464 and Cys-467 each coordinate Zn(2+). Coiled coils occupy residues 486–515 (EAER…QDKR), 541–595 (EDLA…LQRL), and 635–749 (AYRS…RKAS).

The protein belongs to the SMC family. RAD50 subfamily. In terms of assembly, homodimer. Forms a heterotetramer composed of two Mre11 subunits and two Rad50 subunits. Zn(2+) is required as a cofactor.

Functionally, part of the Rad50/Mre11 complex, which is involved in the early steps of DNA double-strand break (DSB) repair. The complex may facilitate opening of the processed DNA ends to aid in the recruitment of HerA and NurA. Rad50 controls the balance between DNA end bridging and DNA resection via ATP-dependent structural rearrangements of the Rad50/Mre11 complex. The polypeptide is DNA double-strand break repair Rad50 ATPase (Aeropyrum pernix (strain ATCC 700893 / DSM 11879 / JCM 9820 / NBRC 100138 / K1)).